The following is a 452-amino-acid chain: uncharacterized protein (452 aa).

The signal sequence occupies residues Met1–Ala20. The tract at residues Thr130–Val151 is disordered.

The protein localises to the endoplasmic reticulum. This is an uncharacterized protein from Schizosaccharomyces pombe (strain 972 / ATCC 24843) (Fission yeast).